The chain runs to 188 residues: Elongation factor P (188 aa).

Lysine 34 is modified (N6-(3,6-diaminohexanoyl)-5-hydroxylysine).

Belongs to the elongation factor P family. May be beta-lysylated on the epsilon-amino group of Lys-34 by the combined action of EpmA and EpmB, and then hydroxylated on the C5 position of the same residue by EpmC (if this protein is present). Lysylation is critical for the stimulatory effect of EF-P on peptide-bond formation. The lysylation moiety may extend toward the peptidyltransferase center and stabilize the terminal 3-CCA end of the tRNA. Hydroxylation of the C5 position on Lys-34 may allow additional potential stabilizing hydrogen-bond interactions with the P-tRNA.

It is found in the cytoplasm. Its pathway is protein biosynthesis; polypeptide chain elongation. Its function is as follows. Involved in peptide bond synthesis. Alleviates ribosome stalling that occurs when 3 or more consecutive Pro residues or the sequence PPG is present in a protein, possibly by augmenting the peptidyl transferase activity of the ribosome. Modification of Lys-34 is required for alleviation. In Klebsiella pneumoniae (strain 342), this protein is Elongation factor P.